The sequence spans 65 residues: Disintegrin VLO4 (65 aa).

The region spanning 1 to 65 is the Disintegrin domain; that stretch reads MNSGNPCCDP…PDCPRNPWKG (65 aa). Disulfide bonds link cysteine 7–cysteine 30, cysteine 21–cysteine 27, cysteine 26–cysteine 51, and cysteine 39–cysteine 58. The Cell attachment site motif lies at 43-45; sequence RGD.

It belongs to the disintegrin family. Dimeric disintegrin subfamily. In terms of assembly, homodimer; disulfide-linked. In terms of tissue distribution, expressed by the venom gland.

It is found in the secreted. In terms of biological role, poor inhibitor of platelet aggregation. The disintegrin inhibits the adhesion of cells expressing the RGD-dependent integrin alpha-5/beta-1 (ITGA5/ITGB1) to immobilized fibronectin. Inhibition on alpha-2b/beta-3 (ITGA2B/ITGB3) is low. This is Disintegrin VLO4 from Macrovipera lebetina obtusa (Levant blunt-nosed viper).